A 367-amino-acid polypeptide reads, in one-letter code: Putative transport protein MT0215 (367 aa).

Helical transmembrane passes span 18–38 (AAWA…LWVL), 41–61 (FEVI…LVPP), 74–94 (VAVT…LTFV), 161–181 (ITEL…FLYG), 228–248 (AGVG…LASL), 249–269 (VFFG…LAVV), 270–290 (VALL…LIAV), 314–334 (VVLA…LLAV), and 337–357 (VAFF…ADVA).

It belongs to the autoinducer-2 exporter (AI-2E) (TC 2.A.86) family.

It is found in the cell membrane. This Mycobacterium tuberculosis (strain CDC 1551 / Oshkosh) protein is Putative transport protein MT0215.